Consider the following 203-residue polypeptide: NAD(P)H dehydrogenase (quinone) (203 aa).

The 192-residue stretch at 3 to 194 (VLIVYYSMYG…AGARFQGRYV (192 aa)) folds into the Flavodoxin-like domain. Residues 9 to 14 (SMYGHI) and 82 to 84 (TRF) each bind FMN. Tyr-11 is an NAD(+) binding site. Residue Trp-102 participates in substrate binding. Residues 117-123 (SSATQHG) and His-138 contribute to the FMN site.

It belongs to the WrbA family. Requires FMN as cofactor.

It catalyses the reaction a quinone + NADH + H(+) = a quinol + NAD(+). The catalysed reaction is a quinone + NADPH + H(+) = a quinol + NADP(+). The polypeptide is NAD(P)H dehydrogenase (quinone) (Geobacter sulfurreducens (strain ATCC 51573 / DSM 12127 / PCA)).